Consider the following 142-residue polypeptide: MLGLHVGTLISLFLCILLEPIEGSLMQPCQPINQTVSLEKEGCPTCLVIRAPICSGHCVTKEPVFKSPFSTVYQHVCTYRDVRYEMIRLPDCPPWSDPHVTYPVALSCDCSLCNMDTSDCTIESLQPDFCITQRVLTDGDMW.

Residues 1-23 (MLGLHVGTLISLFLCILLEPIEG) form the signal peptide. Disulfide bonds link Cys-29/Cys-77, Cys-43/Cys-92, Cys-46/Cys-130, Cys-54/Cys-108, Cys-58/Cys-110, and Cys-113/Cys-120. Asn-33 is a glycosylation site (N-linked (GlcNAc...) asparagine).

The protein belongs to the glycoprotein hormones subunit beta family. Heterodimer of an alpha and a beta chain.

Its subcellular location is the secreted. Functionally, involved in gametogenesis and steroidogenesis. The polypeptide is Gonadotropin subunit beta-2 (cgbb) (Oncorhynchus tshawytscha (Chinook salmon)).